Reading from the N-terminus, the 549-residue chain is RNA-induced transcriptional silencing complex protein tas3 (549 aa).

Disordered stretches follow at residues 89 to 111 (KNSP…VRAS), 126 to 184 (DGKE…SDSI), 202 to 225 (IRSS…SSKS), 298 to 361 (LDNF…HLEK), and 381 to 430 (AHFH…PLAS). A compositionally biased stretch (polar residues) spans 298 to 307 (LDNFNRPSQQ). Composition is skewed to basic and acidic residues over residues 328–361 (YDSY…HLEK) and 403–416 (SDRQ…ELPT). Over residues 419-430 (LNASDSHNPLAS) the composition is skewed to polar residues.

In terms of assembly, ago1, chp1 and tas3 interact to form the core of the RNA-induced transcriptional silencing (RITS) complex. The RITS complex interacts with the RDRC complex via interaction between ago1 and hrr1. Clr4 has a role in mediating this interaction.

Its subcellular location is the nucleus. It is found in the cytoplasm. It localises to the cytoskeleton. The protein localises to the microtubule organizing center. The protein resides in the spindle pole body. In terms of biological role, has a role in the RNA interference (RNAi) pathway which is important for heterochromatin formation and accurate chromosome segregation. A member of the RNA-induced transcriptional silencing (RITS) complex which is involved in the biosynthesis of dsRNA from primer siRNAs provided by the RNA-directed RNA polymerase (RDRC) complex. This Schizosaccharomyces pombe (strain 972 / ATCC 24843) (Fission yeast) protein is RNA-induced transcriptional silencing complex protein tas3 (tas3).